Reading from the N-terminus, the 116-residue chain is Dynein light chain Tctex-type 3 (116 aa).

Tyr4 carries the post-translational modification 3'-nitrotyrosine.

This sequence belongs to the dynein light chain Tctex-type family. As to quaternary structure, homodimer. The cytoplasmic dynein 1 complex consists of two catalytic heavy chains (HCs) and a number of non-catalytic subunits presented by intermediate chains (ICs), light intermediate chains (LICs) and light chains (LCs); the composition seems to vary in respect to the IC, LIC and LC composition. The heavy chain homodimer serves as a scaffold for the probable homodimeric assembly of the respective non-catalytic subunits. The ICs and LICs bind directly to the HC dimer and the LCs assemble on the IC dimer. DYNLT1 and DYNLT3 compete for association with dynein IC (DYNC1I1 or DYNC1I2). Self-associates. Interacts with DYNC1I1 and DYNC1I2. Interacts with BUB3. Interacts with SATB1 in nucleus to form complex with matrix attachment regions (MARs) of DNA.

The protein resides in the nucleus. The protein localises to the cytoplasm. It is found in the cytoskeleton. It localises to the chromosome. Its subcellular location is the centromere. The protein resides in the kinetochore. Functionally, acts as one of several non-catalytic accessory components of the cytoplasmic dynein 1 complex that are thought to be involved in linking dynein to cargos and to adapter proteins that regulate dynein function. Cytoplasmic dynein 1 acts as a motor for the intracellular retrograde motility of vesicles and organelles along microtubules. Probably binds BUB3 as part of transport cargo. Required for the efficient progression through mitosis. The polypeptide is Dynein light chain Tctex-type 3 (DYNLT3) (Ovis aries (Sheep)).